Consider the following 170-residue polypeptide: Putative phosphoesterase OB1230 (170 aa).

His-34 functions as the Proton donor in the catalytic mechanism. 2 consecutive short sequence motifs (HXTX) follow at residues 34-37 (HLTL) and 115-118 (HITI). The Proton acceptor role is filled by His-115.

Belongs to the 2H phosphoesterase superfamily. YjcG family.

In Oceanobacillus iheyensis (strain DSM 14371 / CIP 107618 / JCM 11309 / KCTC 3954 / HTE831), this protein is Putative phosphoesterase OB1230.